Here is a 339-residue protein sequence, read N- to C-terminus: GDP-fucose transporter 1 (339 aa).

A run of 8 helical transmembrane segments spans residues 9–29 (SVRIAAVVAAYWTISISLVFL), 45–65 (LFVTWYQCVVTVICLFFLSLL), 82–102 (LSVAKQVLPLSAVFVGMITFN), 111–133 (VSFYNVGRSLTTVFNVICTYVIL), 136–156 (STSYKAVICCAVIIGGFLMGV), 165–185 (ISYSGVLFGVLASLCVSLNAI), 209–229 (ACFLFLPLMALLGEIGEVAHF), and 237–257 (FWLMMTIGGVFGIAIGYITGL). The tract at residues 319–339 (AHTIQASKDDKALQEDGQTKV) is disordered. Basic and acidic residues predominate over residues 325–339 (SKDDKALQEDGQTKV).

This sequence belongs to the TPT transporter family. SLC35C subfamily.

Its subcellular location is the golgi apparatus membrane. The catalysed reaction is GMP(out) + GDP-beta-L-fucose(in) = GMP(in) + GDP-beta-L-fucose(out). In terms of biological role, antiporter specific for GDP-l-fucose and depending on the concomitant reverse transport of GMP. Involved in GDP-fucose import from the cytoplasm into the Golgi lumen. In Nematostella vectensis (Starlet sea anemone), this protein is GDP-fucose transporter 1 (slc35c1).